The chain runs to 104 residues: Pterin-4-alpha-carbinolamine dehydratase (104 aa).

N-acetylalanine is present on alanine 2. Substrate contacts are provided by residues 61–63 (DHH) and 78–81 (STHE).

It belongs to the pterin-4-alpha-carbinolamine dehydratase family. In terms of assembly, homotetramer and homodimer. Heterotetramer with HNF1A; formed by a dimer of dimers. Interacts with HNF1B (via HNF-p1 domain); the interaction increases HNF1B transactivation activity.

The protein localises to the cytoplasm. The protein resides in the nucleus. The catalysed reaction is (4aS,6R)-4a-hydroxy-L-erythro-5,6,7,8-tetrahydrobiopterin = (6R)-L-erythro-6,7-dihydrobiopterin + H2O. Involved in tetrahydrobiopterin biosynthesis. Seems to both prevent the formation of 7-pterins and accelerate the formation of quinonoid-BH2. Coactivator for HNF1A-dependent transcription. Regulates the dimerization of homeodomain protein HNF1A and enhances its transcriptional activity. Also acts as a coactivator for HNF1B-dependent transcription. The chain is Pterin-4-alpha-carbinolamine dehydratase (PCBD1) from Bos taurus (Bovine).